The primary structure comprises 281 residues: MSTLTVDNVTKTYGDVVALDSVSFEIENEFVVLLGESGAGKSTMLRCVNGLTHPTEGEIRLNGDPINGSRSDIGMIFQQHNLVDGVSAYMNALTGSLDRTSTVSSLLQQQNKETKERALEALQTVGLLEESHQRTSQMSGGQQQRVGIARALVQDPALLLADEPVASLDPSSAESVMDYLKKAASVHEVTALVSLHQVNIAAYFGERFIGLRDGEILFDVSPEKLTPGLVDDLYGNVETVGLATDNSDNSTVDTSDGTRYDTETGSDGTDEVDVIGRQVES.

Positions 4-238 constitute an ABC transporter domain; it reads LTVDNVTKTY…LVDDLYGNVE (235 aa). 35-42 contributes to the ATP binding site; it reads GESGAGKS. The disordered stretch occupies residues 243–281; the sequence is ATDNSDNSTVDTSDGTRYDTETGSDGTDEVDVIGRQVES. Residues 244-255 show a composition bias toward low complexity; it reads TDNSDNSTVDTS.

Belongs to the ABC transporter superfamily. Phosphonates importer (TC 3.A.1.9.1) family. In terms of assembly, the complex is composed of two ATP-binding proteins (PhnC), two transmembrane proteins (PhnE) and a solute-binding protein (PhnD).

The protein localises to the cell membrane. It carries out the reaction phosphonate(out) + ATP + H2O = phosphonate(in) + ADP + phosphate + H(+). Its function is as follows. Part of the ABC transporter complex PhnCDE involved in phosphonates import. Responsible for energy coupling to the transport system. The polypeptide is Phosphonates import ATP-binding protein PhnC 2 (Haloquadratum walsbyi (strain DSM 16790 / HBSQ001)).